The sequence spans 192 residues: Ion-translocating oxidoreductase complex subunit A (192 aa).

The next 6 membrane-spanning stretches (helical) occupy residues 5 to 25, 39 to 59, 65 to 85, 102 to 122, 134 to 154, and 171 to 191; these read LLLLVGTVLVNNFVLVKFLGL, IGMSMATTFVLTLASILSYLV, LPFDLGYLRTMSFILVIAVVV, ALGIYLPLITTNCAVLGVALL, AIFGFGAAVGFSLVLILFSAM, and AIAMVTAGLMSLAFMGFTGLV.

Belongs to the NqrDE/RnfAE family. In terms of assembly, the complex is composed of six subunits: RnfA, RnfB, RnfC, RnfD, RnfE and RnfG.

The protein resides in the cell inner membrane. Functionally, part of a membrane-bound complex that couples electron transfer with translocation of ions across the membrane. The chain is Ion-translocating oxidoreductase complex subunit A from Shewanella piezotolerans (strain WP3 / JCM 13877).